Here is a 332-residue protein sequence, read N- to C-terminus: Casein kinase I isoform 2 (332 aa).

The region spanning 11–282 (FRIGQKIGSG…YLKRLFRELF (272 aa)) is the Protein kinase domain. ATP contacts are provided by residues 17-25 (IGSGSFGEI) and lysine 40. Aspartate 133 functions as the Proton acceptor in the catalytic mechanism. The tract at residues 306 to 332 (EGRADQQQQQQQQQQRRGSEKEDEHPV) is disordered. Over residues 311–320 (QQQQQQQQQQ) the composition is skewed to low complexity. Basic and acidic residues predominate over residues 322–332 (RGSEKEDEHPV).

It belongs to the protein kinase superfamily. Ser/Thr protein kinase family. The cofactor is Mg(2+).

It catalyses the reaction L-seryl-[protein] + ATP = O-phospho-L-seryl-[protein] + ADP + H(+). The enzyme catalyses L-threonyl-[protein] + ATP = O-phospho-L-threonyl-[protein] + ADP + H(+). In terms of biological role, serine/threonine protein kinase. May phosphorylate ZC3H11 during unstressed conditions, leading to proteasome-dependent degradation of ZC3H11. The polypeptide is Casein kinase I isoform 2 (Trypanosoma brucei brucei).